Reading from the N-terminus, the 400-residue chain is Bifunctional arginine demethylase and lysyl-hydroxylase psr-1 (400 aa).

The JmjC domain occupies 146–310; it reads RKTKKLSEDY…LVWPKTVKGR (165 aa). T189 contacts substrate. Fe cation is bound by residues H192 and D194. N202 provides a ligand contact to 2-oxoglutarate. Position 209 (K209) interacts with substrate. Fe cation is bound at residue H278. T290 is a binding site for 2-oxoglutarate. A disordered region spans residues 342-400; that stretch reads DMNESSSDSSSSSSSSDDSSDESDCDDSGRCGGRKRKNDDRSNECPEKMSTTYFQNSLV. Residues 346–358 show a composition bias toward low complexity; it reads SSSDSSSSSSSSD. Basic and acidic residues predominate over residues 378–388; it reads KNDDRSNECPE. Residues 390–400 show a composition bias toward polar residues; sequence MSTTYFQNSLV.

This sequence belongs to the JMJD6 family. As to quaternary structure, interacts with ced-5 and ced-12. Fe(2+) serves as cofactor.

It localises to the nucleus. Dioxygenase that can both act as a histone arginine demethylase and a lysyl-hydroxylase. This is Bifunctional arginine demethylase and lysyl-hydroxylase psr-1 (psr-1) from Caenorhabditis elegans.